The primary structure comprises 501 residues: ADP,ATP carrier protein 3 (501 aa).

12 helical membrane passes run 23–43 (LKLF…FGAL), 59–79 (IISL…TVLY), 90–110 (YIFY…AYII), 146–166 (YALM…LMFW), 183–203 (PVLG…LVFF), 227–247 (IMLQ…MLLF), 293–313 (IALL…PWKA), 326–346 (FNFM…FMVI), 361–381 (LLTP…IIFI), 383–403 (EIGA…VGAI), 446–466 (FGKS…PTAT), and 470–490 (IIIY…WNVI).

It belongs to the ADP/ATP translocase tlc family.

The protein localises to the cell membrane. In terms of biological role, provides the rickettsial cell with host ATP in exchange for rickettsial ADP. This is an obligate exchange system. This energy acquiring activity is an important component of rickettsial parasitism. In Rickettsia felis (strain ATCC VR-1525 / URRWXCal2) (Rickettsia azadi), this protein is ADP,ATP carrier protein 3 (tlcC).